We begin with the raw amino-acid sequence, 679 residues long: Glycine--tRNA ligase beta subunit (679 aa).

It belongs to the class-II aminoacyl-tRNA synthetase family. As to quaternary structure, tetramer of two alpha and two beta subunits.

It is found in the cytoplasm. The enzyme catalyses tRNA(Gly) + glycine + ATP = glycyl-tRNA(Gly) + AMP + diphosphate. This is Glycine--tRNA ligase beta subunit from Streptococcus pyogenes serotype M6 (strain ATCC BAA-946 / MGAS10394).